The primary structure comprises 586 residues: MKQSVSAEQIELKSSLPGSKKVYVDGPREGMKVPMREIEQSDTNGVPNPPIRVYDTSGPYTDPAYKVELEKGIPTPRHSWILERGDVEAYEGREVKPEDDGVKVASKHTPVFPQMDRKPLRAKQGANVTQMHYARNGIITSEMEYVAIREGVDPEFVRKEIAEGRAILPANINHPEAELMIIGRNFHVKVNANIGNSAVSSSIAEEVEKMTWATRWGADTIMDLSTGKNIHTTREWIIRNAPVPVGTVPIYQALEKVNGIAEDLTWEVYRDTLIEQAEQGVDYFTIHAGVLLRYIPITAKRTTGIVSRGGSIMAQWCLFHHKENFLYTHFEEICEIMKQYDVSFSLGDGLRPGSIADANDEAQFSELETLGELTKIAWKHDVQVMIEGPGHVPMHLIKENMEKELDICQGAPFYTLGPLTTDIAPGYDHITSAIGAAMIGWFGTAMLCYVTPKEHLGLPNKDDVREGVITYKIAAHAADLAKGHKTAHQRDDALSKARFEFRWRDQFNLSLDPERAMEYHDETLPAEGAKTAHFCSMCGPKFCSMRISHDIREYAKENDLETTEAIEKGMKEKAKEFKETGSHLYQ.

Residues methionine 1–glycine 58 form a disordered region. The segment covering valine 22–glutamate 39 has biased composition (basic and acidic residues). Residues asparagine 193, methionine 222, tyrosine 251, histidine 287, serine 307–glycine 309, aspartate 348–arginine 351, and glutamate 387 contribute to the substrate site. Histidine 391 contributes to the Zn(2+) binding site. Position 414 (tyrosine 414) interacts with substrate. Zn(2+) is bound at residue histidine 455. [4Fe-4S] cluster-binding residues include cysteine 535, cysteine 538, and cysteine 543.

Belongs to the ThiC family. The cofactor is [4Fe-4S] cluster.

The enzyme catalyses 5-amino-1-(5-phospho-beta-D-ribosyl)imidazole + S-adenosyl-L-methionine = 4-amino-2-methyl-5-(phosphooxymethyl)pyrimidine + CO + 5'-deoxyadenosine + formate + L-methionine + 3 H(+). Its pathway is cofactor biosynthesis; thiamine diphosphate biosynthesis. Its function is as follows. Catalyzes the synthesis of the hydroxymethylpyrimidine phosphate (HMP-P) moiety of thiamine from aminoimidazole ribotide (AIR) in a radical S-adenosyl-L-methionine (SAM)-dependent reaction. The chain is Phosphomethylpyrimidine synthase from Bacillus thuringiensis (strain Al Hakam).